We begin with the raw amino-acid sequence, 485 residues long: Dipeptide and tripeptide permease C (485 aa).

Over 1–12 (MKTPSQPRAIYY) the chain is Cytoplasmic. Residues 13-33 (IVAIQIWEYFSFYGMRALLIL) form a helical membrane-spanning segment. Over 34–46 (YLTHQLGFDDNHA) the chain is Periplasmic. A helical transmembrane segment spans residues 47–67 (ISLFSAYASLVYVTPILGGWL). Topologically, residues 68–70 (ADR) are cytoplasmic. The helical transmembrane segment at 71–93 (LLGNRTAVIAGALLMTLGHVVLG) threads the bilayer. Topologically, residues 94–102 (IDTNSTFSL) are periplasmic. The chain crosses the membrane as a helical span at residues 103–125 (YLALAIIICGYGLFKSNISCLLG). At 126 to 140 (ELYDENDHRRDGGFS) the chain is on the cytoplasmic side. The helical transmembrane segment at 141–161 (LLYAAGNIGSIAAPIACGLAA) threads the bilayer. Topologically, residues 162-164 (QWY) are periplasmic. A helical membrane pass occupies residues 165-185 (GWHVGFALAGGGMFIGLLIFL). At 186-208 (SGHRHFQSTRSMDKKALTSVKFA) the chain is on the cytoplasmic side. Residues 209-229 (LPVWSWLVVMLCLAPVFFTLL) traverse the membrane as a helical segment. Over 230–234 (LENDW) the chain is Periplasmic. A helical transmembrane segment spans residues 235–255 (SGYLLAIVCLIAAQIIARMMI). Over 256-262 (KFPEHRR) the chain is Cytoplasmic. The helical transmembrane segment at 263–283 (ALWQIVLLMFVGTLFWVLAQQ) threads the bilayer. Residues 284-307 (GGSTISLFIDRFVNRQAFNIEVPT) are Periplasmic-facing. The chain crosses the membrane as a helical span at residues 308 to 328 (ALFQSVNAIAVMLAGVVLAWL). Over 329–340 (ASPESRGNSTLR) the chain is Cytoplasmic. Residues 341–361 (VWLKFAFGLLLMACGFMLLAF) form a helical membrane-spanning segment. At 362 to 375 (DARHAAADGQASMG) the chain is on the periplasmic side. Residues 376–396 (VMISGLALMGFAELFIDPVAI) traverse the membrane as a helical segment. Residues 397-406 (AQITRLKMSG) are Cytoplasmic-facing. The chain crosses the membrane as a helical span at residues 407–427 (VLTGIYMLATGAVANWLAGVV). The Periplasmic segment spans residues 428–446 (AQQTTESQISGMAIAAYQR). A helical membrane pass occupies residues 447–467 (FFSQMGEWTLACVAIIVVLAF). Residues 468-485 (ATRFLFSTPTNMIQESND) are Cytoplasmic-facing.

Belongs to the major facilitator superfamily. Proton-dependent oligopeptide transporter (POT/PTR) (TC 2.A.17) family. Monomer.

It localises to the cell inner membrane. In terms of biological role, proton-dependent permease that transports di- and tripeptides. Shows significantly higher specificity towards dipeptides than tripeptides. Has a preference for dipeptides with a C-terminal Lys residue. Can bind Ala-Lys, Lys-Ala, Ala-Ala. Can also transport alanine and trialanine. This is Dipeptide and tripeptide permease C from Escherichia coli (strain K12).